A 530-amino-acid chain; its full sequence is Autoinducer-2 kinase (530 aa).

Belongs to the FGGY kinase family.

It is found in the cytoplasm. It catalyses the reaction (S)-4,5-dihydroxypentane-2,3-dione + ATP = (2S)-2-hydroxy-3,4-dioxopentyl phosphate + ADP + H(+). Catalyzes the phosphorylation of autoinducer-2 (AI-2) to phospho-AI-2, which subsequently inactivates the transcriptional regulator LsrR and leads to the transcription of the lsr operon. Phosphorylates the ring-open form of (S)-4,5-dihydroxypentane-2,3-dione (DPD), which is the precursor to all AI-2 signaling molecules, at the C5 position. The sequence is that of Autoinducer-2 kinase from Salmonella typhimurium (strain LT2 / SGSC1412 / ATCC 700720).